The following is a 482-amino-acid chain: 2-succinylbenzoate--CoA ligase (482 aa).

The protein belongs to the ATP-dependent AMP-binding enzyme family. MenE subfamily.

The enzyme catalyses 2-succinylbenzoate + ATP + CoA = 2-succinylbenzoyl-CoA + AMP + diphosphate. It functions in the pathway quinol/quinone metabolism; 1,4-dihydroxy-2-naphthoate biosynthesis; 1,4-dihydroxy-2-naphthoate from chorismate: step 5/7. The protein operates within quinol/quinone metabolism; menaquinone biosynthesis. Its function is as follows. Converts 2-succinylbenzoate (OSB) to 2-succinylbenzoyl-CoA (OSB-CoA). This is 2-succinylbenzoate--CoA ligase from Bacillus anthracis (strain A0248).